The sequence spans 965 residues: 26S proteasome regulatory subunit rpn2 (965 aa).

PC repeat units follow at residues 385–418, 424–457, 459–493, 494–528, 530–563, 564–599, 600–632, 634–668, 669–699, and 712–744; these read TATA…PSSS, GAFY…EIVQ, GLLL…VAGS, AAGI…EKII, GLGI…TLRY, AGMF…DVRR, AAVC…PHVR, GSAI…FVRQ, GAMI…FEQV, and GATL…SAIV. Disordered stretches follow at residues 826 to 883 and 934 to 965; these read AKRA…KSET and NRDA…DDDD. Composition is skewed to basic and acidic residues over residues 827-856 and 874-883; these read KRAE…KEAT and SKKEEPKSET. Residues 945-965 are compositionally biased toward acidic residues; that stretch reads EPGEQEASPPEDFEYPFDDDD. S952 bears the Phosphoserine mark.

It belongs to the proteasome subunit S1 family.

Its function is as follows. Acts as a regulatory subunit of the 26S proteasome which is involved in the ATP-dependent degradation of ubiquitinated proteins. The sequence is that of 26S proteasome regulatory subunit rpn2 (rpn2) from Schizosaccharomyces pombe (strain 972 / ATCC 24843) (Fission yeast).